Reading from the N-terminus, the 213-residue chain is Ribonuclease HII (213 aa).

Residues 20–209 (ELVAGVDEVG…VRQAYEALEG (190 aa)) enclose the RNase H type-2 domain. The a divalent metal cation site is built by D26, E27, and D118.

This sequence belongs to the RNase HII family. The cofactor is Mn(2+). Requires Mg(2+) as cofactor.

It localises to the cytoplasm. The enzyme catalyses Endonucleolytic cleavage to 5'-phosphomonoester.. Endonuclease that specifically degrades the RNA of RNA-DNA hybrids. This is Ribonuclease HII from Pseudomonas fluorescens (strain Pf0-1).